Here is a 142-residue protein sequence, read N- to C-terminus: Deoxyuridine 5'-triphosphate nucleotidohydrolase (142 aa).

Substrate-binding positions include 62 to 64, N75, and 79 to 81; these read RSG and TID.

This sequence belongs to the dUTPase family. Mg(2+) is required as a cofactor.

It carries out the reaction dUTP + H2O = dUMP + diphosphate + H(+). It participates in pyrimidine metabolism; dUMP biosynthesis; dUMP from dCTP (dUTP route): step 2/2. Functionally, this enzyme is involved in nucleotide metabolism: it produces dUMP, the immediate precursor of thymidine nucleotides and it decreases the intracellular concentration of dUTP so that uracil cannot be incorporated into DNA. The sequence is that of Deoxyuridine 5'-triphosphate nucleotidohydrolase from Clostridium novyi (strain NT).